A 160-amino-acid polypeptide reads, in one-letter code: Ribosomal RNA large subunit methyltransferase H (160 aa).

Residues leucine 76 and glycine 108 each contribute to the S-adenosyl-L-methionine site.

This sequence belongs to the RNA methyltransferase RlmH family. In terms of assembly, homodimer.

The protein localises to the cytoplasm. The enzyme catalyses pseudouridine(1915) in 23S rRNA + S-adenosyl-L-methionine = N(3)-methylpseudouridine(1915) in 23S rRNA + S-adenosyl-L-homocysteine + H(+). Functionally, specifically methylates the pseudouridine at position 1915 (m3Psi1915) in 23S rRNA. This chain is Ribosomal RNA large subunit methyltransferase H, found in Rhodopseudomonas palustris (strain HaA2).